The following is a 251-amino-acid chain: Sugar fermentation stimulation protein homolog (251 aa).

The protein belongs to the SfsA family.

The chain is Sugar fermentation stimulation protein homolog from Symbiobacterium thermophilum (strain DSM 24528 / JCM 14929 / IAM 14863 / T).